The following is a 238-amino-acid chain: Zinc import ATP-binding protein ZnuC (238 aa).

Residues 5–220 (VKLKNVCVNL…LEFISIFGLK (216 aa)) enclose the ABC transporter domain. Residue 37–44 (GPNGAGKS) participates in ATP binding.

Belongs to the ABC transporter superfamily. Zinc importer (TC 3.A.1.15.5) family. In terms of assembly, the complex is composed of two ATP-binding proteins (ZnuC), two transmembrane proteins (ZnuB) and a solute-binding protein (ZnuA).

It is found in the cell inner membrane. It catalyses the reaction Zn(2+)(out) + ATP(in) + H2O(in) = Zn(2+)(in) + ADP(in) + phosphate(in) + H(+)(in). Functionally, part of the ABC transporter complex ZnuABC involved in zinc import. Responsible for energy coupling to the transport system. The polypeptide is Zinc import ATP-binding protein ZnuC (Buchnera aphidicola subsp. Acyrthosiphon pisum (strain APS) (Acyrthosiphon pisum symbiotic bacterium)).